Consider the following 280-residue polypeptide: Secreted RxLR effector protein 39 (280 aa).

A signal peptide spans 1 to 19 (MRGAYYVAIALLIVASCSA). Positions 49–70 (RVLRGSRDLKNKWAVHAGGEDR) match the RxLR-dEER motif. The segment at 229 to 249 (EVKARSSKRQRTNPMLNNMDG) is disordered.

Belongs to the RxLR effector family.

It localises to the secreted. The protein resides in the host nucleus. In terms of biological role, secreted effector that completely suppresses the host cell death induced by cell death-inducing proteins. This chain is Secreted RxLR effector protein 39, found in Plasmopara viticola (Downy mildew of grapevine).